Consider the following 136-residue polypeptide: Ig kappa chain V-V region MOPC 21 (136 aa).

The first 29 residues, 1–29 (MHQTSMGIKMESHTLVFISILLCLYGADG), serve as a signal peptide directing secretion. The interval 30 to 52 (NIVMTQSPKSMSMSVGERVTLTC) is framework-1. Residues 53–63 (KASENVVTYVS) are complementarity-determining-1. Positions 64–78 (WYQQKPEQSPKLLIY) are framework-2. Residues 79–85 (GASNRYT) form a complementarity-determining-2 region. The interval 86–117 (GVPDRFTGSGSATDFTLTISSVQAEDLADYHC) is framework-3. The tract at residues 118–126 (GQGYSYPYT) is complementarity-determining-3. The framework-4 stretch occupies residues 127–136 (FGGGTKLEIK).

The polypeptide is Ig kappa chain V-V region MOPC 21 (Mus musculus (Mouse)).